A 498-amino-acid polypeptide reads, in one-letter code: METLLKPFPSLLLSSPTPYRSIVQQNPSFLSPTTKKKSRKCLLRNKSSKLFCSFLDLAPTSKPESLDVNISWVDPNSNRAQFDVIIIGAGPAGLRLAEQVSKYGIKVCCVDPSPLSMWPNNYGVWVDEFENLGLEDCLDHKWPMTCVHINDNKTKYLGRPYGRVSRKKLKLKLLNSCVENRVKFYKAKVWKVEHEEFESSIVCDDGKKIRGSLVVDASGFASDFIEYDRPRNHGYQIAHGVLVEVDNHPFDLDKMVLMDWRDSHLGNEPYLRVNNAKEPTFLYAMPFDRDLVFLEETSLVSRPVLSYMEVKRRMVARLRHLGIKVKSVIEEEKCVIPMGGPLPRIPQNVMAIGGNSGIVHPSTGYMVARSMALAPVLAEAIVEGLGSTRMIRGSQLYHRVWNGLWPLDRRCVRECYSFGMETLLKLDLKGTRRLFDAFFDLDPKYWQGFLSSRLSVKELGLLSLCLFGHGSNMTRLDIVTKCPLPLVRLIGNLAIESL.

The N-terminal 42 residues, 1 to 42, are a transit peptide targeting the chloroplast; it reads METLLKPFPSLLLSSPTPYRSIVQQNPSFLSPTTKKKSRKCL.

Belongs to the lycopene cyclase family. In terms of tissue distribution, expressed exclusively in chromoplast-containing tissues of flowers and fruits. Expressed in preanthesis flowers.

The protein localises to the plastid. It localises to the chloroplast. It carries out the reaction all-trans-violaxanthin = all-trans-neoxanthin. The enzyme catalyses a carotenoid psi-end group = a carotenoid beta-end derivative. The protein operates within carotenoid biosynthesis; neoxanthin biosynthesis. It functions in the pathway carotenoid biosynthesis; beta-carotene biosynthesis. Involved in the synthesis of neoxanthin, the last product of carotenoid synthesis and a precursor of abscisic acid. Involved in the beta-carotene biosynthesis. This is Neoxanthin synthase, chloroplastic from Solanum lycopersicum (Tomato).